Reading from the N-terminus, the 883-residue chain is Protein argonaute 16 (883 aa).

Positions 254–366 (PVFDFLLTNQ…VPIELCHMVS (113 aa)) constitute a PAZ domain. The Piwi domain occupies 535-844 (FLLCVLPERK…AAAQMGQFMK (310 aa)).

Belongs to the argonaute family. Ago subfamily.

In terms of biological role, probably involved in the RNA silencing pathway. May bind to short RNAs such as microRNAs (miRNAs) or short interfering RNAs (siRNAs), and represses the translation of mRNAs which are complementary to them. The polypeptide is Protein argonaute 16 (AGO16) (Oryza sativa subsp. japonica (Rice)).